A 425-amino-acid polypeptide reads, in one-letter code: Serine--tRNA ligase (425 aa).

231 to 233 is a binding site for L-serine; sequence TAE. 262 to 264 is an ATP binding site; that stretch reads RSE. Position 285 (Glu285) interacts with L-serine. Residue 349-352 participates in ATP binding; it reads EISS. Ser385 serves as a coordination point for L-serine.

This sequence belongs to the class-II aminoacyl-tRNA synthetase family. Type-1 seryl-tRNA synthetase subfamily. As to quaternary structure, homodimer. The tRNA molecule binds across the dimer.

It localises to the cytoplasm. The catalysed reaction is tRNA(Ser) + L-serine + ATP = L-seryl-tRNA(Ser) + AMP + diphosphate + H(+). It catalyses the reaction tRNA(Sec) + L-serine + ATP = L-seryl-tRNA(Sec) + AMP + diphosphate + H(+). It participates in aminoacyl-tRNA biosynthesis; selenocysteinyl-tRNA(Sec) biosynthesis; L-seryl-tRNA(Sec) from L-serine and tRNA(Sec): step 1/1. Its function is as follows. Catalyzes the attachment of serine to tRNA(Ser). Is also able to aminoacylate tRNA(Sec) with serine, to form the misacylated tRNA L-seryl-tRNA(Sec), which will be further converted into selenocysteinyl-tRNA(Sec). In Bartonella quintana (strain Toulouse) (Rochalimaea quintana), this protein is Serine--tRNA ligase.